The sequence spans 358 residues: MAATLGSGERWTEAYIDAVRRNKYPEDTPPESHDPCGCCNCMKAQKEKKSENEWTQTRQGEGNSTYSEEQLLGVQRIKKCRNYYEILGVSRDASDEELKKAYRKLALKFHPDKNCAPGATDAFKAIGNAFAVLSNPDKRLRYDEYGDEQVTFTAPRARPYNYYRDFEADITPEELFNVFFGGHFPTGNIHMFSNVTDDTYYYRRRHRHERTQTQKEEEEEKPQTTYSAFIQLLPVLVIVIISVITQLLATNPPYSLFYKSTLGYTISRETQNLQVPYFVDKNFDKAYRGASLHDLEKTIEKDYIDYIQTSCWKEKQQKSELTNLAGLYRDERLKQKAESLKLENCEKLSKLIGLRRGG.

The J domain maps to 82-146; it reads NYYEILGVSR…DKRLRYDEYG (65 aa). The chain crosses the membrane as a helical span at residues 228–248; sequence AFIQLLPVLVIVIISVITQLL.

The protein resides in the endoplasmic reticulum membrane. Functionally, (Microbial infection) In case of infection by polyomavirus, involved in the virus endoplasmic reticulum membrane penetration and infection. Regulates the recruitment of DNAJB12:DNAJB14 into SV40-induced foci and all cooperate to guide SV40 across the endoplasmic reticulum membrane. The foci represent the site from which SV40 penetrates into the cytosol. The protein is DnaJ homolog subfamily C member 18 of Homo sapiens (Human).